Consider the following 147-residue polypeptide: Glucosamine 6-phosphate N-acetyltransferase (147 aa).

Positions 7–147 (LELRVLEESD…AHERQMRLDL (141 aa)) constitute an N-acetyltransferase domain. D-glucosamine 6-phosphate contacts are provided by residues T28 and 86-88 (EDV). Acetyl-CoA-binding positions include 88–90 (VVV) and 96–101 (GAGLGK). Residues 117 to 118 (YK) and D122 each bind D-glucosamine 6-phosphate. Acetyl-CoA is bound at residue 131–133 (YEK).

Belongs to the acetyltransferase family. GNA1 subfamily. In terms of assembly, homodimer. Contains poly-N-acetyllactosamines.

Its subcellular location is the glycosome. It carries out the reaction D-glucosamine 6-phosphate + acetyl-CoA = N-acetyl-D-glucosamine 6-phosphate + CoA + H(+). It participates in nucleotide-sugar biosynthesis; UDP-N-acetyl-alpha-D-glucosamine biosynthesis; N-acetyl-alpha-D-glucosamine 1-phosphate from alpha-D-glucosamine 6-phosphate (route I): step 1/2. Its function is as follows. Involved in the biosynthesis of UDP-N-acetyl-alpha-D-glucosamine. Catalyzes the formation of N-acetyl-D-glucosamine 6-phosphate from acetyl-coenzyme A (acetyl-CoA) and D-glucosamine 6-phosphate. The protein is Glucosamine 6-phosphate N-acetyltransferase of Trypanosoma brucei brucei.